A 290-amino-acid chain; its full sequence is Phosphatidylglycerol--prolipoprotein diacylglyceryl transferase (290 aa).

A run of 7 helical transmembrane segments spans residues 21–41, 60–80, 96–116, 124–144, 198–218, 225–245, and 260–280; these read VALHWYGLMYLVGFIFAMWLA, LLYAGFLGVFLGGRIGYVLFY, WDGGMSFHGGLIGVILVMVIF, FFQVADFMAPLIPFGLGAGRL, SQLYELALEGVVLFIILNLFI, GSVSGLFLIGYGAFRIIVEFF, and ISMGQILSIPMIVAGIIMMIW. Arg143 contributes to the a 1,2-diacyl-sn-glycero-3-phospho-(1'-sn-glycerol) binding site.

The protein belongs to the Lgt family.

The protein resides in the cell inner membrane. It carries out the reaction L-cysteinyl-[prolipoprotein] + a 1,2-diacyl-sn-glycero-3-phospho-(1'-sn-glycerol) = an S-1,2-diacyl-sn-glyceryl-L-cysteinyl-[prolipoprotein] + sn-glycerol 1-phosphate + H(+). It participates in protein modification; lipoprotein biosynthesis (diacylglyceryl transfer). Catalyzes the transfer of the diacylglyceryl group from phosphatidylglycerol to the sulfhydryl group of the N-terminal cysteine of a prolipoprotein, the first step in the formation of mature lipoproteins. This is Phosphatidylglycerol--prolipoprotein diacylglyceryl transferase from Enterobacter sp. (strain 638).